Consider the following 777-residue polypeptide: Endonuclease MutS2 (777 aa).

Residue 328–335 (GPNTGGKT) coordinates ATP. The region spanning 702–777 (LDIRGMNTLE…GDGATEVYLK (76 aa)) is the Smr domain.

This sequence belongs to the DNA mismatch repair MutS family. MutS2 subfamily. Homodimer. Binds to stalled ribosomes, contacting rRNA.

Functionally, endonuclease that is involved in the suppression of homologous recombination and thus may have a key role in the control of bacterial genetic diversity. Acts as a ribosome collision sensor, splitting the ribosome into its 2 subunits. Detects stalled/collided 70S ribosomes which it binds and splits by an ATP-hydrolysis driven conformational change. Acts upstream of the ribosome quality control system (RQC), a ribosome-associated complex that mediates the extraction of incompletely synthesized nascent chains from stalled ribosomes and their subsequent degradation. Probably generates substrates for RQC. This is Endonuclease MutS2 from Carboxydothermus hydrogenoformans (strain ATCC BAA-161 / DSM 6008 / Z-2901).